Here is an 81-residue protein sequence, read N- to C-terminus: Sulfur carrier protein TusA (81 aa).

Cys-19 functions as the Cysteine persulfide intermediate in the catalytic mechanism.

The protein belongs to the sulfur carrier protein TusA family. As to quaternary structure, interacts with IscS.

It is found in the cytoplasm. The protein operates within tRNA modification. Its function is as follows. Sulfur carrier protein involved in sulfur trafficking in the cell. Part of a sulfur-relay system required for 2-thiolation during synthesis of 2-thiouridine of the modified wobble base 5-methylaminomethyl-2-thiouridine (mnm(5)s(2)U) in tRNA. Interacts with IscS and stimulates its cysteine desulfurase activity. Accepts an activated sulfur from IscS, which is then transferred to TusD, and thus determines the direction of sulfur flow from IscS to 2-thiouridine formation. Also appears to be involved in sulfur transfer for the biosynthesis of molybdopterin. In Pectobacterium atrosepticum (strain SCRI 1043 / ATCC BAA-672) (Erwinia carotovora subsp. atroseptica), this protein is Sulfur carrier protein TusA.